The following is a 188-amino-acid chain: Transcription factor FapR (188 aa).

Belongs to the FapR family.

Its function is as follows. Transcriptional factor involved in regulation of membrane lipid biosynthesis by repressing genes involved in fatty acid and phospholipid metabolism. The polypeptide is Transcription factor FapR (Bacillus licheniformis (strain ATCC 14580 / DSM 13 / JCM 2505 / CCUG 7422 / NBRC 12200 / NCIMB 9375 / NCTC 10341 / NRRL NRS-1264 / Gibson 46)).